Reading from the N-terminus, the 217-residue chain is Uridylate kinase (217 aa).

An ATP-binding site is contributed by 6–10; the sequence is KLSGR. Residue Gly38 coordinates UMP. ATP-binding residues include Gly39 and Arg43. Residues Asp60 and 107–113 contribute to the UMP site; that span reads FQPGQST. Residues Asn134, Tyr139, and Asp142 each coordinate ATP.

The protein belongs to the UMP kinase family. In terms of assembly, homohexamer.

The protein localises to the cytoplasm. The catalysed reaction is UMP + ATP = UDP + ADP. The protein operates within pyrimidine metabolism; CTP biosynthesis via de novo pathway; UDP from UMP (UMPK route): step 1/1. Inhibited by UTP. In terms of biological role, catalyzes the reversible phosphorylation of UMP to UDP. In Pyrobaculum neutrophilum (strain DSM 2338 / JCM 9278 / NBRC 100436 / V24Sta) (Thermoproteus neutrophilus), this protein is Uridylate kinase.